The following is a 326-amino-acid chain: Gamma-resorcylate decarboxylase (326 aa).

Residues glutamate 8, histidine 10, histidine 164, and aspartate 287 each coordinate Mn(2+). The active site involves aspartate 287.

This sequence belongs to the metallo-dependent hydrolases superfamily. ACMSD family. Homotetramer. The cofactor is Mn(2+).

It carries out the reaction 2,6-dihydroxybenzoate + H(+) = resorcinol + CO2. The enzyme catalyses 2,3-dihydroxybenzoate + H(+) = catechol + CO2. It functions in the pathway aromatic compound metabolism. Its activity is regulated as follows. Activity is inhibited by 2-nitroresorcinol (2-NR). Functionally, involved in the gamma-resorcylate (2,6-dihydroxybenzoate) catabolism. Catalyzes the reversible decarboxylation of gamma-resorcylate to resorcinol. Also catalyzes the decarboxylation of 2,3-dihydroxybenzoate to catechol, 2,4,6-trihydroxybenzoate to benzene-1,3,5-triol, and 2,6-dihydroxy-4-methylbenzoate to 5-methylbenzene-1,3-diol. In Polaromonas sp. (strain JS666 / ATCC BAA-500), this protein is Gamma-resorcylate decarboxylase.